Here is a 500-residue protein sequence, read N- to C-terminus: ACT domain-containing protein ACR2 (500 aa).

ACT domains lie at Val39–Asn121, Ala136–Ala213, Ile298–Glu373, and Lys376–Ser459. The disordered stretch occupies residues Glu450–Arg478. The segment covering Pro462–Pro474 has biased composition (polar residues).

Its function is as follows. May bind amino acids. The chain is ACT domain-containing protein ACR2 from Arabidopsis thaliana (Mouse-ear cress).